A 328-amino-acid polypeptide reads, in one-letter code: UPF0194 membrane protein YPTS_1292 (328 aa).

The signal sequence occupies residues 1–22 (MNRKKIIVAAVIVALLATLAYG). Coiled-coil stretches lie at residues 80–109 (YLNA…REEE) and 142–209 (AVSA…ILLA).

This sequence belongs to the UPF0194 family.

It is found in the periplasm. The chain is UPF0194 membrane protein YPTS_1292 from Yersinia pseudotuberculosis serotype IB (strain PB1/+).